A 557-amino-acid chain; its full sequence is Formate--tetrahydrofolate ligase (557 aa).

Residue 67–74 (TPAGEGKT) coordinates ATP.

Belongs to the formate--tetrahydrofolate ligase family.

It catalyses the reaction (6S)-5,6,7,8-tetrahydrofolate + formate + ATP = (6R)-10-formyltetrahydrofolate + ADP + phosphate. It participates in one-carbon metabolism; tetrahydrofolate interconversion. This Cereibacter sphaeroides (strain ATCC 17025 / ATH 2.4.3) (Rhodobacter sphaeroides) protein is Formate--tetrahydrofolate ligase.